The sequence spans 323 residues: Mitochondrial glutamate carrier 1 (323 aa).

Solcar repeat units follow at residues 6–93 (ISLP…FRHQ), 101–214 (LTLL…LNQL), and 223–312 (SPFY…GIAE). Helical transmembrane passes span 12–32 (LING…IDLA), 62–82 (YFGM…EKAI), 107–127 (MLAG…MEML), 189–209 (GLGA…PLFA), 223–243 (SPFY…AVAV), and 292–312 (ALVI…GIAE).

The protein belongs to the mitochondrial carrier (TC 2.A.29) family. As to expression, expressed at high levels in brain, liver, and pancreas.

It is found in the mitochondrion inner membrane. It carries out the reaction L-glutamate(in) + H(+)(in) = L-glutamate(out) + H(+)(out). Mitochondrial glutamate/H(+) symporter. Responsible for the transport of glutamate from the cytosol into the mitochondrial matrix with the concomitant import of a proton. Plays a role in the control of glucose-stimulated insulin secretion. The polypeptide is Mitochondrial glutamate carrier 1 (Homo sapiens (Human)).